A 253-amino-acid chain; its full sequence is Ferritin-2, chloroplastic (253 aa).

Residues 1-45 (MLHKASPALSLLSSGYTGGGNLFPPSRNSSNLLFSPSGSRFSVQA) constitute a chloroplast transit peptide. The extension peptide (EP) stretch occupies residues 46 to 82 (AKGTNTKSLTGVVFEPFEEVKKEMELVPTTPFVSLAR). The 154-residue stretch at 83–236 (HKFSDDSESA…EYVAQLRRIG (154 aa)) folds into the Ferritin-like diiron domain. Residues Glu100, Glu135, His138, Glu184, and Gln218 each contribute to the Fe cation site.

Belongs to the ferritin family. In terms of assembly, oligomer of 24 subunits. There are two types of subunits: L (light) chain and H (heavy) chain. The major chain can be light or heavy, depending on the species and tissue type. The functional molecule forms a roughly spherical shell with a diameter of 12 nm and contains a central cavity into which the insoluble mineral iron core is deposited.

It is found in the plastid. The protein localises to the chloroplast. The catalysed reaction is 4 Fe(2+) + O2 + 4 H(+) = 4 Fe(3+) + 2 H2O. In terms of biological role, stores iron in a soluble, non-toxic, readily available form. Important for iron homeostasis. Has ferroxidase activity. Iron is taken up in the ferrous form and deposited as ferric hydroxides after oxidation. This chain is Ferritin-2, chloroplastic (FER2), found in Arabidopsis thaliana (Mouse-ear cress).